A 291-amino-acid polypeptide reads, in one-letter code: Protein CMSS1 (291 aa).

Residues 1–96 form a disordered region; the sequence is MADDLGDEWW…KKTITDVLTS (96 aa). The span at 17-27 shows a compositional bias: acidic residues; the sequence is DVPEVEEETEH. The span at 58–79 shows a compositional bias: basic and acidic residues; the sequence is VKKECFITQERSEEKPDNESNK.

Belongs to the CMS1 family.

The protein is Protein CMSS1 (cmss1) of Danio rerio (Zebrafish).